The chain runs to 447 residues: Putative FBD-associated F-box protein At1g61330 (447 aa).

The F-box domain maps to 10–57 (KLIKRLSDELVECILSFLPVQSTLQHRVLSKRYRDTWKLSRDLDFSGI). The 33-residue stretch at 384–416 (VKIIGYKGHWHELDIVEFFVKNAPSLKRLELQM) folds into the FBD domain.

This chain is Putative FBD-associated F-box protein At1g61330, found in Arabidopsis thaliana (Mouse-ear cress).